Consider the following 223-residue polypeptide: Methanol utilization control regulatory protein MoxX (223 aa).

The Response regulatory domain occupies 16–133 (QILIVDDHPV…EICAAFTEVA (118 aa)). Residues 155 to 220 (PGTSAPRLTG…DLVVKGIRYF (66 aa)) enclose the HTH luxR-type domain. A DNA-binding region (H-T-H motif) is located at residues 179-198 (YRDIADRACISYKTVSNVSL).

In terms of processing, phosphorylated by MoxY.

The protein localises to the cytoplasm. In terms of biological role, member of the two-component regulatory system MoxY/MoxX probably involved in the regulation of the methanol dehydrogenase expression. The protein is Methanol utilization control regulatory protein MoxX (moxX) of Paracoccus denitrificans.